The sequence spans 170 residues: Peptide methionine sulfoxide reductase MsrA (170 aa).

Residue C14 is part of the active site.

This sequence belongs to the MsrA Met sulfoxide reductase family.

It catalyses the reaction L-methionyl-[protein] + [thioredoxin]-disulfide + H2O = L-methionyl-(S)-S-oxide-[protein] + [thioredoxin]-dithiol. The catalysed reaction is [thioredoxin]-disulfide + L-methionine + H2O = L-methionine (S)-S-oxide + [thioredoxin]-dithiol. Its function is as follows. Has an important function as a repair enzyme for proteins that have been inactivated by oxidation. Catalyzes the reversible oxidation-reduction of methionine sulfoxide in proteins to methionine. In Streptomyces avermitilis (strain ATCC 31267 / DSM 46492 / JCM 5070 / NBRC 14893 / NCIMB 12804 / NRRL 8165 / MA-4680), this protein is Peptide methionine sulfoxide reductase MsrA.